We begin with the raw amino-acid sequence, 352 residues long: Photosystem II D2 protein (352 aa).

Residues 40–60 (CAYLAVGAWFTGTTFVTSWYT) traverse the membrane as a helical segment. His117 lines the chlorophyll a pocket. Residues 124-140 (GFTLRQFEIARLIGLRP) traverse the membrane as a helical segment. Pheophytin a contacts are provided by Gln129 and Asn142. The chain crosses the membrane as a helical span at residues 152–165 (VFVSVFLLYPLGQA). Residue His197 coordinates chlorophyll a. Residues 207–227 (AALLCAIHGATVENTLFEDGD) traverse the membrane as a helical segment. A plastoquinone contacts are provided by His214 and Phe261. Fe cation is bound at residue His214. His268 provides a ligand contact to Fe cation. Residues 278–294 (GLWMSAIGVVGLGVNLR) traverse the membrane as a helical segment.

This sequence belongs to the reaction center PufL/M/PsbA/D family. In terms of assembly, PSII is composed of 1 copy each of membrane proteins PsbA, PsbB, PsbC, PsbD, PsbE, PsbF, PsbH, PsbI, PsbJ, PsbK, PsbL, PsbM, PsbT, PsbX, PsbY, PsbZ, Psb30/Ycf12, at least 3 peripheral proteins of the oxygen-evolving complex and a large number of cofactors. It forms dimeric complexes. It depends on The D1/D2 heterodimer binds P680, chlorophylls that are the primary electron donor of PSII, and subsequent electron acceptors. It shares a non-heme iron and each subunit binds pheophytin, quinone, additional chlorophylls, carotenoids and lipids. There is also a Cl(-1) ion associated with D1 and D2, which is required for oxygen evolution. The PSII complex binds additional chlorophylls, carotenoids and specific lipids. as a cofactor.

Its subcellular location is the plastid. It is found in the cyanelle thylakoid membrane. The catalysed reaction is 2 a plastoquinone + 4 hnu + 2 H2O = 2 a plastoquinol + O2. Functionally, photosystem II (PSII) is a light-driven water:plastoquinone oxidoreductase that uses light energy to abstract electrons from H(2)O, generating O(2) and a proton gradient subsequently used for ATP formation. It consists of a core antenna complex that captures photons, and an electron transfer chain that converts photonic excitation into a charge separation. The D1/D2 (PsbA/PsbD) reaction center heterodimer binds P680, the primary electron donor of PSII as well as several subsequent electron acceptors. D2 is needed for assembly of a stable PSII complex. The sequence is that of Photosystem II D2 protein from Cyanophora paradoxa.